The primary structure comprises 36 residues: Pancreatic polypeptide (36 aa).

At Y36 the chain carries Tyrosine amide.

Belongs to the NPY family.

It is found in the secreted. Its function is as follows. Hormone secreted by pancreatic cells that acts as a regulator of pancreatic and gastrointestinal functions. The chain is Pancreatic polypeptide (PPY) from Struthio camelus (Common ostrich).